The sequence spans 226 residues: UPF0173 metal-dependent hydrolase CHY_0920 (226 aa).

The protein belongs to the UPF0173 family.

This Carboxydothermus hydrogenoformans (strain ATCC BAA-161 / DSM 6008 / Z-2901) protein is UPF0173 metal-dependent hydrolase CHY_0920.